Reading from the N-terminus, the 259-residue chain is DNA repair protein RecO (259 aa).

It belongs to the RecO family.

Involved in DNA repair and RecF pathway recombination. The protein is DNA repair protein RecO of Chloroherpeton thalassium (strain ATCC 35110 / GB-78).